Here is a 295-residue protein sequence, read N- to C-terminus: MDNSGKQAEAMALLAEAERKVKNSQSFFSGLFGGSSKIEEACEIYARAANMFKMAKNWSAAGNAFCQAAQLHLQLQSKHDAATCFVDAGNAFKKADPQEAINCLMRAIEIYTDMGRFTIAAKHHISIAEIYETELVDVEKAIAHYEQSADYYKGEESNSSANKCLLKVAGYAAQLEQYQKAIDIYEQVGTSAMDSPLLKYSAKDYFFKAALCHFCIDMLNAKLAVQKYEELFPAFSDSRECKLMKKLLEAHEEQNVDSYTEAVKEYDSISRLDQWLTTMLLRIKKTIQGDEEDLR.

Methionine 1 carries the post-translational modification N-acetylmethionine. Residues serine 26, serine 29, and serine 195 each carry the phosphoserine modification.

This sequence belongs to the SNAP family. As to quaternary structure, interacts with PRKCABP, and disrupts the interaction between GRIA2 and PRKCABP, leading to the internalization of GRIA2. Found in a complex with VAMP8. Component of a SNARE-like complex that contains at least ZW10, USE1L, RINT1, STX18 and NAPA/SNAP-alpha. Interacts with VTI1A. Interacts with STX12. Interacts with GNA12 (via N-terminus); the interaction promotes CDH5 localization to plasma membrane.

Its subcellular location is the cell membrane. Its function is as follows. Required for vesicular transport between the endoplasmic reticulum and the Golgi apparatus. Together with GNA12 promotes CDH5 localization to plasma membrane. The protein is Alpha-soluble NSF attachment protein (Napa) of Mus musculus (Mouse).